The following is a 154-amino-acid chain: Ribonuclease H (154 aa).

The RNase H type-1 domain occupies 1–142 (MRKQVEIFTD…CDELARAAAG (142 aa)). The Mg(2+) site is built by Asp10, Glu48, Asp70, and Asp134.

The protein belongs to the RNase H family. In terms of assembly, monomer. Mg(2+) is required as a cofactor.

It localises to the cytoplasm. The enzyme catalyses Endonucleolytic cleavage to 5'-phosphomonoester.. In terms of biological role, endonuclease that specifically degrades the RNA of RNA-DNA hybrids. In Pectobacterium carotovorum subsp. carotovorum (strain PC1), this protein is Ribonuclease H.